We begin with the raw amino-acid sequence, 333 residues long: Secreted mono- and diacylglycerol lipase 1 (333 aa).

Residues 1 to 16 (MMLILSILSIIAFAAA) form the signal peptide. Cystine bridges form between Cys56–Cys268 and Cys276–Cys298. Residue Ser176 is the Nucleophile of the active site. Catalysis depends on residues Asp230 and His288.

The protein belongs to the AB hydrolase superfamily. Lipase family. Class 3 subfamily.

The protein resides in the secreted. The enzyme catalyses a monoacylglycerol + H2O = glycerol + a fatty acid + H(+). It carries out the reaction a diacylglycerol + H2O = a monoacylglycerol + a fatty acid + H(+). Its function is as follows. Secreted mono- and diacylglycerol lipase that allows the use of hydrolyzed lipids as carbon source and might play a role in pathogenicity. Shows lipolytic activity towards olive oil and p-nitrophenylpalmitate. This is Secreted mono- and diacylglycerol lipase 1 from Fusarium solani (Filamentous fungus).